We begin with the raw amino-acid sequence, 3946 residues long: MGSLSDVRVEPIAIVGSACRFPGGANSPSKLWDLLHSPRDVLMDFPPSRLRLSNFYHKDGEHHGSTNVINKSYLLAEDPNVFDAAFFNINGLEAQAMDPQHRILLETVYEALERGGCSLDDIQGTKTSVFVGVMNADYYDIQLRDSETMARYNATGTARSIISNRISYFFDLKGASMTIDTACSSSLVALHQAVLSLQNREAEASIVAGANLLLDPTMYIAESNLHMLSPEARSRMWDKDANGYARGEGFAAVYLKPLSAALRDGDEIECIIRGTGVNSDGRTKGITMPSSVAQTELIRDTYRRAGLDPSVDRPQFVECHGTGTAAGDPVEARAVHDAFFPPSSKRDNERPLYAGSIKTIIGHLEGCAGLAGVLKASLALQNRIIPPNMHFNDLSPSVKPFYGMIQIPKQPMPWPESTTFRASVNSFGFGGTNAHVILEGYYKGGECLNGGCQQARLDSFVGPMLFSGNTQTTLRAMIKEYFDYLSANPSLDLEGLARALADRRSMFPVRAFFSGSNREALLKYMGQALISSEGSDIGTRSLASSDTPGLLGIFTGQGAQWATMGKALIHSCLLFRVSIENCEESLSTLPDPPSWSLMQELLADDKESRIGQAAFSQPLCTALQIALVDLCSASAITFDAVVGHSSGEIAAAYAAGILSAKDAIRIAYYRGLYAKLASGPDGQPGAMMAVGLSMEGAMSFIAECGLYGKVCLAASNSPSSVTLSGDKDAILQAKGFLDERKVFARQLQVDTAYHSHHMLSCADAYLKSLEACNIKPSLPRAGCVWVSSVRGDIEILEKGDFTSLNSQYWVDNMVKPVLFSQAVECSLWAGGPFDMVLELGPHPALKGPATQTLKSALGTSLPYAGIMRRATNEVEAFSGAIGYVWSHLTDYHIDFASYRESFFKEADRAPATLKDLPSYPWQHDKAYWKESRISRQFRLRHSPLHELLGRRAPDDSDSEMRWRNVLRLSELEWIRGHEFQGQALFPAMGYIAMALEAVTIATKGQQISLVDIEDFHVLQAVVLEEEHPGVEIVFSLKQTGDCKWDFNCYTCSDEWKDLTKTSTGRLILFKGEGSASELPSRPKKRANLSPLDREMFYRKLSSLGLSYHGLFKPQSSFQRSQSYATGSASWPLDQLGQEYVVHPAVMDVALHSIFVAFASPVSHELWATYLPVAIDRLSFNPNISLYGTDGALTIEIDTFITESSSSTMKGDVYLLSPDATPSILIEGVRLQSFTEAKALNDRLLFSKIVWGADIAHGFSSHAVECANKDQFELCDAMERTSLFFLQRAFAELAPCEIEQSEPQFRHLHTAFLKVIEQIKGGLHKSIHSEWLGDSWNDVNSLRRSFESSIDLEMMHAIGQSLPDVIRGRRPLLEVMMRDNLLNRFYTDGRLFVPLNLYVAKTVKAMIHKNPHMKILEIGAGTGATTKAILDTIGDTFDSYTYTDISPGFFAQAQERFALHRQQMRFQTLDIERDTVEQGFERHSYDLVVAANVLHATSHLQETMGHVRSLLRPGGYLLIVEVTGETLQLMYVMGGFPGWWLGVDDGRTDGPGIPAVQWEGLLQMTGFSGIEATVSDLPSDGKHSCSALVSQAIDDKLELFRDPLPRVGDVPIRDPILILGGGTLPVAKLVTGVRKLLRPFRWNIQHAPSVDHLTVPLEGSRSVICLSELDNPLLSEPLTDTRLSKLQAVLGSATNVLWITRDRLTDYPHSNMINGLGRTLQFELPDINIQFLDIRSGISIGADQVVTKFLQLCLVNSPEYLQDDVPWKIEPELSFDGEEWQIPRIIPYKALNDRYNATRRQIMKPLDASRQPVELACFDGRIIIREGKRVTGTSTGSVRLRTILTTRLVSSRLASFFLCMGVEADNGRTAVAITTRMGSLMDIPSTDAWFLPQRSQCDPALLYFIAGQVLAVALSFASPRSGSVILYEPTEALAEAIILSRSWVQEQPYFITSRSGTLQKGWTYIHPRVSHNIARDVLPGDTAALIDCSDDCPHWAVPTTVGKLIPLASCVVEYLTRTPSTFSSIIEHAYSESLLAALPSTAQLSASILSVEDSAGQSSSLLSYPNIVNFDCNNAVLATVAPLDCTGLFSSAKTYWMIGLNSELGLSICRWMIVQGARHIAITSRSGKVDAPWLDEIQSMNGNIKVYPMDVADREAVHSVHQEILRTMPPIAGVCNGAMVLSDKLFMNMKAEDMNKVLKPKVDGSIYLDELFCTTQLDFFILFSSLASVVGNGGQCNYHAANMFMTSLVSQRRSRGLAASVIDIGLVVDVGYVARAGQSLIDHLVNLFYTPLSESDIHKLFAEAVMASPVDSGLCPDIIMGVEPVHDISASLKKPPWYNNPIFSHLRLGTEASSQDSDQSNSTSASIRDQVSSASSVEEGTDVLLRCFAAKLEAMLSLATNSVNVNMPLLDIGVDSLLAVEIRQWFLTKLYVDIPVLKVLSGDTVVEICAEAIQKFAQMSPSAFQGTSSAASKIKQATASPPEIGREEAQSTSRAGILPTDQDNDNSSDSESQRKSGASSSSGSGTRTPTSIDEYFETNVNMLSRSGPMSYAQSRLWFQQQLVKDPTALNIVVRFDVKGYLDVDRLAAAVTATVNRHDALHSAYFAHLDTQEPLQGVIEAPGDIFQHVKVHDDNAASAIFLEMQNRHWDLERGDVFKVTLLTFPTNVQSLIIAYHHIVLDGFSWHVYLRDLSMSYQQQALPPVGPQALDFALIEAQETKNEEYNAQLEFWREELSPVPETFPLLPFSSSKVRQGMQSFQSTTATRELHFDILARAKAASQRLRVTPFHFHLAIAQVLLYKLTNIGDLCIGVTDVNRTNRKFAETVGFFLNLVPLRLRVKPTDSFTEVLHRTSKKALSAMEHSGVPIDVVLRELNIRRSSGHSPLFQVVFNYRVGDMLQVPFGGGRLELHSSIEARSPYDVVFNVTQCPSGASYLQVTSRDALYAPEVSGVICDMYIRLLEDFAGDTSMQIQDGLLNDKSEPGIGLGPRLEFGWPRTMSELFSQRAATDANSIAVKDCRGAVSYAELQQRVADITQDILGCNPPPNARVAVCIHPSRDTIAAMLATLAAGCVYVPIDITLPEARRRAILDSCRPSVILCDSTSADSIDQFAPQECRKVDLGYSPTRATTTAMPEPVADDPAFLLYSSGSTGIPKGILLPQKGYMNYLASKGHHLCLGREVVLQQSSVGFDMSIAQIGNALAHGGTVVVVPQSVRGDPVATAQLMLQEKVTFMIGTPSEYLMLLQHGGDYLRQYRDWRHACLGGESVTEPLKREFRRLSPNCPNVTDCYGPTEISAATSFNTLDLHRGAANEYSTVGRPIPNSTIYILGANGDIVPPGLVGEICIGGVGVALGYWNLPDLEKQKFIHDPFASSADRRRGWTRLYKTGDRGRLGPDGGLIFMGRLDGDTQIKLRGLRIDLEEVANSLLQVAAGLLSETVVSVRGDPEFLVAHAVPARGQKVTNSDLESFKRSLPLPQYMCPAAIVLLDRLPTTPNGKVDRKALQDKPLPTEPDSSFPTEALSLAEGELRLVWQDVLQQTAQTGRIDSRTDFFMAGGNSLLLVKLQGAIKNAYGLSIALKDLYRCSTLGRMATLIDAEKKNQPIFEKIDWEDETRVPGSLARGQRSREPKKTDLHIALTGSTGFLGMEILKALLEQPTVSKVHCLAVDAQHGQSLPKSHKIVIYPGSLNVSALGLSTREVDFLKSTVDALIHAGANGHCLNNYFSLRMPNLGSTRFLTELALSRGVPLHYVSSNRVTLLSGDVALPPGSMSAFPPPETGSDGFTASKWASERYLENVAEATGLDVCIHRPCALTGDQAPSEDALNAILRFSVLMKVVPQFPNVRGFFDFEKVGVVATNIVKKALQSVQVTRVHATSVASFAHHSSGVKVPIDKIQDRMQDLYGGVFGRLALADWVQRARTLGIEPLVASYLEAMESRGEEMAFPFLGMPSD.

A Ketosynthase family 3 (KS3) domain is found at 9–440; that stretch reads VEPIAIVGSA…GTNAHVILEG (432 aa). Residues Cys183, His320, and His363 each act as for beta-ketoacyl synthase activity in the active site. The interval 553-871 is malonyl-CoA:ACP transacylase (MAT) domain; it reads IFTGQGAQWA…PYAGIMRRAT (319 aa). The interval 945 to 1073 is N-terminal hotdog fold; the sequence is HELLGRRAPD…GRLILFKGEG (129 aa). A dehydratase (DH) domain region spans residues 945 to 1238; that stretch reads HELLGRRAPD…RLQSFTEAKA (294 aa). The region spanning 945–1239 is the PKS/mFAS DH domain; it reads HELLGRRAPD…LQSFTEAKAL (295 aa). His977 (proton acceptor; for dehydratase activity) is an active-site residue. The C-terminal hotdog fold stretch occupies residues 1088–1239; that stretch reads LSPLDREMFY…LQSFTEAKAL (152 aa). Asp1147 serves as the catalytic Proton donor; for dehydratase activity. The interval 1380 to 1580 is methyltransferase (MT) domain; it reads LLNRFYTDGR…ATVSDLPSDG (201 aa). The segment at 2093 to 2266 is ketoreductase (KR) domain; it reads TYWMIGLNSE…AASVIDIGLV (174 aa). Positions 2352–2365 are enriched in low complexity; sequence SSQDSDQSNSTSAS. A disordered region spans residues 2352 to 2372; it reads SSQDSDQSNSTSASIRDQVSS. The 78-residue stretch at 2378–2455 folds into the Carrier 1 domain; that stretch reads EGTDVLLRCF…EICAEAIQKF (78 aa). Position 2415 is an O-(pantetheine 4'-phosphoryl)serine (Ser2415). A disordered region spans residues 2474 to 2531; sequence KQATASPPEIGREEAQSTSRAGILPTDQDNDNSSDSESQRKSGASSSSGSGTRTPTSI. Over residues 2508–2530 the composition is skewed to low complexity; that stretch reads DSESQRKSGASSSSGSGTRTPTS. Residues 2547–2976 form a condensation (C) domain region; the sequence is PMSYAQSRLW…MQIQDGLLND (430 aa). The adenylation (A) (KR) domain stretch occupies residues 3000-3402; the sequence is FSQRAATDAN…GGLIFMGRLD (403 aa). The disordered stretch occupies residues 3492-3511; the sequence is GKVDRKALQDKPLPTEPDSS. The Carrier 2 domain occupies 3515 to 3594; that stretch reads EALSLAEGEL…RMATLIDAEK (80 aa). Ser3554 bears the O-(pantetheine 4'-phosphoryl)serine mark. Residues 3633–3833 are reductase (RED) domain; the sequence is LTGSTGFLGM…RFSVLMKVVP (201 aa).

This sequence in the C-terminal section; belongs to the NRP synthetase family.

Its function is as follows. Hybrid PKS-NRPS synthetase; part of the gene cluster 23 that mediates the biosynthesis of a family of 2-pyridones known as leporins. The hybrid PKS-NRPS synthetase lepA and the enoyl reductase lepG are responsible for fusion of phenylalanine with a hexaketide and subsequent release of the stable tetramic acid precursor, pre-leporin C. Because lepA lacks a designated enoylreductase (ER) domain, the required activity is provided the enoyl reductase lepG. It is possible that the dehydrogenase lepF also participates in production of pre-leporin C. Cytochrome P450 monooxygenase lepH is then required for the ring expansion step to yield leporin C. Leporin C is then presumably further oxidized by the N-hydroxylase lepD to form leporin B. LepI may possess a function in biosynthesis upstream of lepA. Leporin B is further oxidized in the presence of ferric ion to give the leporin B trimer-iron chelate, but whether or not this reaction is catalyzed by an enzyme in the pathway or by ferric ion is not determined yet. This is Hybrid PKS-NRPS synthetase lepA from Aspergillus flavus (strain ATCC 200026 / FGSC A1120 / IAM 13836 / NRRL 3357 / JCM 12722 / SRRC 167).